A 146-amino-acid chain; its full sequence is Large ribosomal subunit protein uL15 (146 aa).

A disordered region spans residues 1–65; sequence MSDIQLNTLK…GQMPLQRRLP (65 aa). Positions 24 to 34 are enriched in gly residues; it reads RGIGSGLGKTA.

It belongs to the universal ribosomal protein uL15 family. In terms of assembly, part of the 50S ribosomal subunit.

In terms of biological role, binds to the 23S rRNA. This chain is Large ribosomal subunit protein uL15, found in Bordetella petrii (strain ATCC BAA-461 / DSM 12804 / CCUG 43448).